The chain runs to 577 residues: Gamma-tubulin complex component gfh1 (577 aa).

It belongs to the TUBGCP family.

It is found in the cytoplasm. The protein localises to the cytoskeleton. Its subcellular location is the microtubule organizing center. It localises to the spindle pole body. In terms of biological role, required for proper anchoring of astral microtubules at the spindle pole bodies (SPBs), during anaphase, ensuring correct cell polarity. This Schizosaccharomyces pombe (strain 972 / ATCC 24843) (Fission yeast) protein is Gamma-tubulin complex component gfh1 (gfh1).